Reading from the N-terminus, the 149-residue chain is Large ribosomal subunit protein bL9 (149 aa).

It belongs to the bacterial ribosomal protein bL9 family.

In terms of biological role, binds to the 23S rRNA. This Sulfurihydrogenibium sp. (strain YO3AOP1) protein is Large ribosomal subunit protein bL9.